The following is a 220-amino-acid chain: Peptide methionine sulfoxide reductase MsrA (220 aa).

C52 is a catalytic residue.

The protein belongs to the MsrA Met sulfoxide reductase family.

The enzyme catalyses L-methionyl-[protein] + [thioredoxin]-disulfide + H2O = L-methionyl-(S)-S-oxide-[protein] + [thioredoxin]-dithiol. It catalyses the reaction [thioredoxin]-disulfide + L-methionine + H2O = L-methionine (S)-S-oxide + [thioredoxin]-dithiol. Has an important function as a repair enzyme for proteins that have been inactivated by oxidation. Catalyzes the reversible oxidation-reduction of methionine sulfoxide in proteins to methionine. This is Peptide methionine sulfoxide reductase MsrA from Corynebacterium diphtheriae (strain ATCC 700971 / NCTC 13129 / Biotype gravis).